Consider the following 510-residue polypeptide: Bifunctional purine biosynthesis protein PurH (510 aa).

One can recognise an MGS-like domain in the interval 1–143 (MTKRALISVS…KNHDAVLVLV (143 aa)).

This sequence belongs to the PurH family.

It catalyses the reaction (6R)-10-formyltetrahydrofolate + 5-amino-1-(5-phospho-beta-D-ribosyl)imidazole-4-carboxamide = 5-formamido-1-(5-phospho-D-ribosyl)imidazole-4-carboxamide + (6S)-5,6,7,8-tetrahydrofolate. It carries out the reaction IMP + H2O = 5-formamido-1-(5-phospho-D-ribosyl)imidazole-4-carboxamide. It functions in the pathway purine metabolism; IMP biosynthesis via de novo pathway; 5-formamido-1-(5-phospho-D-ribosyl)imidazole-4-carboxamide from 5-amino-1-(5-phospho-D-ribosyl)imidazole-4-carboxamide (10-formyl THF route): step 1/1. The protein operates within purine metabolism; IMP biosynthesis via de novo pathway; IMP from 5-formamido-1-(5-phospho-D-ribosyl)imidazole-4-carboxamide: step 1/1. The sequence is that of Bifunctional purine biosynthesis protein PurH from Deinococcus radiodurans (strain ATCC 13939 / DSM 20539 / JCM 16871 / CCUG 27074 / LMG 4051 / NBRC 15346 / NCIMB 9279 / VKM B-1422 / R1).